The following is a 272-amino-acid chain: ATP phosphoribosyltransferase regulatory subunit (272 aa).

The protein belongs to the class-II aminoacyl-tRNA synthetase family. HisZ subfamily. In terms of assembly, heteromultimer composed of HisG and HisZ subunits.

It is found in the cytoplasm. The protein operates within amino-acid biosynthesis; L-histidine biosynthesis; L-histidine from 5-phospho-alpha-D-ribose 1-diphosphate: step 1/9. Its function is as follows. Required for the first step of histidine biosynthesis. May allow the feedback regulation of ATP phosphoribosyltransferase activity by histidine. The protein is ATP phosphoribosyltransferase regulatory subunit of Staphylococcus aureus (strain USA300).